A 370-amino-acid chain; its full sequence is Phosphate acyltransferase (370 aa).

Residues 349–370 (SAGRAGQDAPDEMAAPGRSEKR) are disordered.

The protein belongs to the PlsX family. Homodimer. Probably interacts with PlsY.

The protein localises to the cytoplasm. The enzyme catalyses a fatty acyl-[ACP] + phosphate = an acyl phosphate + holo-[ACP]. Its pathway is lipid metabolism; phospholipid metabolism. Its function is as follows. Catalyzes the reversible formation of acyl-phosphate (acyl-PO(4)) from acyl-[acyl-carrier-protein] (acyl-ACP). This enzyme utilizes acyl-ACP as fatty acyl donor, but not acyl-CoA. This chain is Phosphate acyltransferase, found in Cereibacter sphaeroides (strain ATCC 17029 / ATH 2.4.9) (Rhodobacter sphaeroides).